Here is a 101-residue protein sequence, read N- to C-terminus: Large ribosomal subunit protein uL24 (101 aa).

It belongs to the universal ribosomal protein uL24 family. As to quaternary structure, part of the 50S ribosomal subunit.

One of two assembly initiator proteins, it binds directly to the 5'-end of the 23S rRNA, where it nucleates assembly of the 50S subunit. Functionally, one of the proteins that surrounds the polypeptide exit tunnel on the outside of the subunit. The chain is Large ribosomal subunit protein uL24 from Streptococcus suis (strain 98HAH33).